Here is a 177-residue protein sequence, read N- to C-terminus: Large ribosomal subunit protein uL6 (177 aa).

This sequence belongs to the universal ribosomal protein uL6 family. As to quaternary structure, part of the 50S ribosomal subunit.

This protein binds to the 23S rRNA, and is important in its secondary structure. It is located near the subunit interface in the base of the L7/L12 stalk, and near the tRNA binding site of the peptidyltransferase center. The chain is Large ribosomal subunit protein uL6 from Cupriavidus necator (strain ATCC 17699 / DSM 428 / KCTC 22496 / NCIMB 10442 / H16 / Stanier 337) (Ralstonia eutropha).